A 333-amino-acid chain; its full sequence is Glycerol-3-phosphate dehydrogenase [NAD(P)+] (333 aa).

Positions 10, 11, 31, 32, and 105 each coordinate NADPH. Sn-glycerol 3-phosphate-binding residues include lysine 105, glycine 136, and serine 138. An NADPH-binding site is contributed by alanine 140. The sn-glycerol 3-phosphate site is built by lysine 191, aspartate 244, serine 254, arginine 255, and asparagine 256. The Proton acceptor role is filled by lysine 191. Position 255 (arginine 255) interacts with NADPH. 2 residues coordinate NADPH: isoleucine 279 and glutamate 281.

This sequence belongs to the NAD-dependent glycerol-3-phosphate dehydrogenase family.

It is found in the cytoplasm. The enzyme catalyses sn-glycerol 3-phosphate + NAD(+) = dihydroxyacetone phosphate + NADH + H(+). It catalyses the reaction sn-glycerol 3-phosphate + NADP(+) = dihydroxyacetone phosphate + NADPH + H(+). It participates in membrane lipid metabolism; glycerophospholipid metabolism. Functionally, catalyzes the reduction of the glycolytic intermediate dihydroxyacetone phosphate (DHAP) to sn-glycerol 3-phosphate (G3P), the key precursor for phospholipid synthesis. The protein is Glycerol-3-phosphate dehydrogenase [NAD(P)+] of Chlorobium luteolum (strain DSM 273 / BCRC 81028 / 2530) (Pelodictyon luteolum).